The sequence spans 297 residues: Tumor necrosis factor receptor superfamily member 27 (297 aa).

Over 1–138 (MDCQENEYWD…TPTVPPQEAT (138 aa)) the chain is Extracellular. TNFR-Cys repeat units lie at residues 2 to 41 (DCQENEYWDQWGRCVTCQRCGPGQELSKDCGYGEGGDAYC), 43 to 83 (ACPP…NAVC), and 85 to 118 (DCLPRFYRKTRIGGLQDQECIPCTKQTPTSEVQC). 8 disulfides stabilise this stretch: Cys-3-Cys-15, Cys-18-Cys-31, Cys-21-Cys-41, Cys-44-Cys-58, Cys-61-Cys-75, Cys-64-Cys-83, Cys-86-Cys-104, and Cys-107-Cys-118. A glycan (N-linked (GlcNAc...) asparagine) is linked at Asn-74. The chain crosses the membrane as a helical; Signal-anchor for type III membrane protein span at residues 139 to 159 (LVALVSSLLVVFTLAFLGLFF). Residues 160–297 (LYCKQFFNRH…LNVPFEVPSP (138 aa)) are Cytoplasmic-facing. The segment covering 272 to 281 (ETLGGNTVES) has biased composition (polar residues). Residues 272 to 297 (ETLGGNTVESTGDRLELNVPFEVPSP) are disordered.

Associates with TRAF1, TRAF3 and TRAF6.

The protein resides in the membrane. In terms of biological role, receptor for EDA isoform A2, but not for EDA isoform A1. Mediates the activation of the NF-kappa-B and JNK pathways. Activation seems to be mediated by binding to TRAF3 and TRAF6. This chain is Tumor necrosis factor receptor superfamily member 27 (EDA2R), found in Homo sapiens (Human).